The following is a 177-amino-acid chain: Large ribosomal subunit protein uL6 (177 aa).

It belongs to the universal ribosomal protein uL6 family. In terms of assembly, part of the 50S ribosomal subunit.

Its function is as follows. This protein binds to the 23S rRNA, and is important in its secondary structure. It is located near the subunit interface in the base of the L7/L12 stalk, and near the tRNA binding site of the peptidyltransferase center. The protein is Large ribosomal subunit protein uL6 of Bartonella henselae (strain ATCC 49882 / DSM 28221 / CCUG 30454 / Houston 1) (Rochalimaea henselae).